The primary structure comprises 380 residues: Actinidain (380 aa).

The N-terminal stretch at 1–24 (MGLPKSFVSMSLLFFSTLLILSLA) is a signal peptide. Positions 25-126 (FNAKNLTQRT…NRYEPRVGQV (102 aa)) are cleaved as a propeptide — activation peptide. Asparagine 29, asparagine 81, and asparagine 111 each carry an N-linked (GlcNAc...) asparagine glycan. 3 cysteine pairs are disulfide-bonded: cysteine 148/cysteine 191, cysteine 182/cysteine 224, and cysteine 282/cysteine 332. Residue cysteine 151 is part of the active site. Catalysis depends on residues histidine 288 and asparagine 308.

Belongs to the peptidase C1 family. As to expression, fruit, present in small cells of the outer pericarp of mature fruit, but not large cells.

The enzyme catalyses Specificity close to that of papain.. Its function is as follows. Cysteine protease responsible for the cleavage of kiwellin into kissper and KiTH. This Actinidia deliciosa (Kiwi) protein is Actinidain.